Reading from the N-terminus, the 128-residue chain is Probable 4-amino-4-deoxy-L-arabinose-phosphoundecaprenol flippase subunit ArnF (128 aa).

Residues 1-2 are Cytoplasmic-facing; that stretch reads MG. Residues 3 to 23 form a helical membrane-spanning segment; the sequence is LMWGLFSVIIASVAQLSLGFA. Over 24–35 the chain is Periplasmic; sequence ASHLPPMTHLWD. Residues 36 to 56 form a helical membrane-spanning segment; it reads FIATLLAFGLDARILLLGLLG. At 57 to 77 the chain is on the cytoplasmic side; the sequence is YLLSVFCWYKTLHKLALSKAY. The chain crosses the membrane as a helical span at residues 78–98; that stretch reads ALLSMSYVLVWIASMVLPGWG. Residues 99 to 100 lie on the Periplasmic side of the membrane; sequence GT. Residues 101–121 form a helical membrane-spanning segment; sequence FSLKALLGVACIMSGLMLIFL. Over 122–128 the chain is Cytoplasmic; it reads PTTKQRY.

This sequence belongs to the ArnF family. Heterodimer of ArnE and ArnF.

It is found in the cell inner membrane. Its pathway is bacterial outer membrane biogenesis; lipopolysaccharide biosynthesis. Translocates 4-amino-4-deoxy-L-arabinose-phosphoundecaprenol (alpha-L-Ara4N-phosphoundecaprenol) from the cytoplasmic to the periplasmic side of the inner membrane. This Shigella dysenteriae serotype 1 (strain Sd197) protein is Probable 4-amino-4-deoxy-L-arabinose-phosphoundecaprenol flippase subunit ArnF.